The primary structure comprises 171 residues: Co-chaperone protein HscB homolog (171 aa).

The J domain occupies 2 to 74 (NHFELFGLPS…ISRAEYILAE (73 aa)).

It belongs to the HscB family. As to quaternary structure, interacts with HscA and stimulates its ATPase activity.

In terms of biological role, co-chaperone involved in the maturation of iron-sulfur cluster-containing proteins. Seems to help targeting proteins to be folded toward HscA. In Vibrio campbellii (strain ATCC BAA-1116), this protein is Co-chaperone protein HscB homolog.